The primary structure comprises 199 residues: 3-hexulose-6-phosphate isomerase (199 aa).

Positions 44 to 186 (LARQIVQPGR…FQSLWDHTEV (143 aa)) constitute an SIS domain. Residues Ser-62 and 101-106 (SGSGTT) contribute to the substrate site. Glu-166 (proton acceptor) is an active-site residue.

The protein belongs to the SIS family. PHI subfamily.

The enzyme catalyses D-arabino-hex-3-ulose 6-phosphate = beta-D-fructose 6-phosphate. It participates in one-carbon metabolism; formaldehyde assimilation via RuMP pathway; D-fructose 6-phosphate from D-ribulose 5-phosphate and formaldehyde: step 2/2. Functionally, catalyzes the isomerization between 3-hexulose 6-phosphate and fructose 6-phosphate. In Mycobacterium gastri, this protein is 3-hexulose-6-phosphate isomerase (rmpB).